A 513-amino-acid chain; its full sequence is ATP synthase subunit alpha 2 (513 aa).

169 to 176 (GDRQVGKT) provides a ligand contact to ATP.

This sequence belongs to the ATPase alpha/beta chains family. In terms of assembly, F-type ATPases have 2 components, CF(1) - the catalytic core - and CF(0) - the membrane proton channel. CF(1) has five subunits: alpha(3), beta(3), gamma(1), delta(1), epsilon(1). CF(0) has three main subunits: a(1), b(2) and c(9-12). The alpha and beta chains form an alternating ring which encloses part of the gamma chain. CF(1) is attached to CF(0) by a central stalk formed by the gamma and epsilon chains, while a peripheral stalk is formed by the delta and b chains.

The protein localises to the cell inner membrane. The enzyme catalyses ATP + H2O + 4 H(+)(in) = ADP + phosphate + 5 H(+)(out). Produces ATP from ADP in the presence of a proton gradient across the membrane. The alpha chain is a regulatory subunit. The chain is ATP synthase subunit alpha 2 from Psychromonas ingrahamii (strain DSM 17664 / CCUG 51855 / 37).